We begin with the raw amino-acid sequence, 905 residues long: Dopamine D2-like receptor (905 aa).

Positions 1–23 are disordered; sequence MLSPFDWRRGISSSGTGGTMAAQ. Topologically, residues 1 to 377 are extracellular; that stretch reads MLSPFDWRRG…GELRVVDHNY (377 aa). N-linked (GlcNAc...) asparagine glycosylation is found at Asn-88, Asn-146, Asn-156, Asn-166, Asn-174, Asn-257, Asn-314, and Asn-343. The helical transmembrane segment at 378 to 398 threads the bilayer; that stretch reads WALILILFPILTLFGNILVIL. Topologically, residues 399-416 are cytoplasmic; it reads SVCRERSLQTVTNYFIVS. The chain crosses the membrane as a helical span at residues 417 to 437; that stretch reads LAIADLLVAVVVMPFAVYFLV. The Extracellular segment spans residues 438–450; the sequence is NGAWALPDVVCDF. Cysteines 448 and 525 form a disulfide. Residues 451 to 471 form a helical membrane-spanning segment; the sequence is YIAMDVICSTSSIFNLVAISI. Over 472–493 the chain is Cytoplasmic; that stretch reads DRYIAVTQPIKYAKHKNSRRVC. Residues 494 to 514 traverse the membrane as a helical segment; sequence LTILLVWAISAAIGSPIVLGL. Topologically, residues 515–531 are extracellular; the sequence is NNTPNREPDVCAFYNAD. A helical membrane pass occupies residues 532–552; the sequence is FILYSSLSSFYIPCIIMVFLY. Residues 553-830 are Cytoplasmic-facing; the sequence is WNIFKALRSR…AKKERKATKT (278 aa). 3 disordered regions span residues 600–631, 702–753, and 780–799; these read SRHASRILPDEAATNTASGSNEEEDENAISPD, ATSA…SVGV, and DSTLSTTSKTSSRKDKKNSQ. Residues 702 to 722 are compositionally biased toward low complexity; it reads ATSAAPRSSGSPPDSPLPSGA. A compositionally biased stretch (polar residues) spans 723 to 734; that stretch reads TLQRSSVSSQRR. Positions 735 to 746 are enriched in basic and acidic residues; that stretch reads PTGDDSPKRGEP. The chain crosses the membrane as a helical span at residues 831–851; it reads LAIVLGVFLFCWLPFFSCNIM. Residues 852–869 lie on the Extracellular side of the membrane; the sequence is DAMCAKFKKDCRPGLTAY. Residues 870–890 traverse the membrane as a helical segment; the sequence is MMTTWLGYINSFVNPVIYTIF. The Cytoplasmic portion of the chain corresponds to 891–905; it reads NPEFRKAFKKIMHMG.

It belongs to the G-protein coupled receptor 1 family. As to expression, highest expression is in adult heads.

The protein resides in the cell membrane. Functionally, receptor for dopamine. The activity of this receptor is mediated by G proteins which inhibit adenylyl cyclase. This chain is Dopamine D2-like receptor, found in Drosophila melanogaster (Fruit fly).